The sequence spans 325 residues: ATP phosphoribosyltransferase (325 aa).

The protein belongs to the ATP phosphoribosyltransferase family. Long subfamily. Mg(2+) is required as a cofactor.

The protein resides in the cytoplasm. The enzyme catalyses 1-(5-phospho-beta-D-ribosyl)-ATP + diphosphate = 5-phospho-alpha-D-ribose 1-diphosphate + ATP. Its pathway is amino-acid biosynthesis; L-histidine biosynthesis; L-histidine from 5-phospho-alpha-D-ribose 1-diphosphate: step 1/9. Its activity is regulated as follows. Feedback inhibited by histidine. Its function is as follows. Catalyzes the condensation of ATP and 5-phosphoribose 1-diphosphate to form N'-(5'-phosphoribosyl)-ATP (PR-ATP). Has a crucial role in the pathway because the rate of histidine biosynthesis seems to be controlled primarily by regulation of HisG enzymatic activity. The chain is ATP phosphoribosyltransferase from Rhodopseudomonas palustris (strain BisA53).